Here is a 217-residue protein sequence, read N- to C-terminus: Proteasome subunit beta type-9 (217 aa).

Residues 1 to 18 (MLGEEAEPQWISEEVKTG) constitute a propeptide, removed in mature form. The active-site Nucleophile is the T19.

This sequence belongs to the peptidase T1B family. In terms of assembly, the 26S proteasome consists of a 20S proteasome core and two 19S regulatory subunits. The 20S proteasome core is composed of 28 subunits that are arranged in four stacked rings, resulting in a barrel-shaped structure. The two end rings are each formed by seven alpha subunits, and the two central rings are each formed by seven beta subunits. The catalytic chamber with the active sites is on the inside of the barrel. Component of the immunoproteasome, where it displaces the equivalent housekeeping subunit PSMB6. In terms of processing, autocleaved. The resulting N-terminal Thr residue of the mature subunit is responsible for the nucleophile proteolytic activity.

The protein resides in the cytoplasm. The protein localises to the nucleus. It carries out the reaction Cleavage of peptide bonds with very broad specificity.. In terms of biological role, the proteasome is a multicatalytic proteinase complex which is characterized by its ability to cleave peptides with Arg, Phe, Tyr, Leu, and Glu adjacent to the leaving group at neutral or slightly basic pH. The proteasome has an ATP-dependent proteolytic activity. This subunit is involved in antigen processing to generate class I binding peptides. The polypeptide is Proteasome subunit beta type-9 (psmb9) (Oryzias latipes (Japanese rice fish)).